The primary structure comprises 218 residues: MEPGFWHEKWQQQLIGFHQQDINPFLVKYWQTLALPADAKVFVPLCGKSLDMCFLAEQGHQVIGCELNELAVQQFFEENQLPMKKSAEGEHQHYHTEQVSLYQGDIFTLPQSITAKVSGFYDRAALIAWPESMRTQYAKQLAQLLPSGSVGLLVTLDYPQEALSGPPFAVSPTWVETHLSDDFEIQALACQDVLADNPRFVKKEVPWLNEAVYLLRRK.

Positions 10, 45, 66, and 123 each coordinate S-adenosyl-L-methionine.

Belongs to the class I-like SAM-binding methyltransferase superfamily. TPMT family.

It is found in the cytoplasm. It catalyses the reaction S-adenosyl-L-methionine + a thiopurine = S-adenosyl-L-homocysteine + a thiopurine S-methylether.. The protein is Thiopurine S-methyltransferase of Shewanella sp. (strain MR-7).